A 1342-amino-acid chain; its full sequence is Restriction of telomere capping protein 1 (1342 aa).

The disordered stretch occupies residues 1 to 39 (MSLSPHVENASIPKGSTPIPKNRNVSSIGKGEFLGSSSS). WD repeat units follow at residues 207 to 248 (NKFS…SIDN), 256 to 296 (EHTR…SKSS), 305 to 342 (TASDSIRDVKWMPGYNFASKNDQGSSTYGNLKSGYKFA), 367 to 406 (AHTGPGLCLNWHPNQEYIATGGRDGKCCLWFVGDNANAAE), 439 to 486 (NTGY…IPKH), and 489 to 527 (LSETPSLGLVWWDENLIFNIDKGTRINGWDINKEPTVLE). Disordered regions lie at residues 559–593 (PELQPTSSTTCKKHPGTIKNPKNGNPENQGIIGGI), 600–619 (TGLTSFTPERPPTLKAGPTF), 630–651 (ASSFNSSSASLTSLTPQTENRE), 736–766 (KNATETHGDNTTTTNNNDDGDDDDDDDDDDD), and 788–831 (LMNE…DRSR). Residues 630–644 (ASSFNSSSASLTSLT) are compositionally biased toward low complexity. Residues 753–766 (DDGDDDDDDDDDDD) are compositionally biased toward acidic residues. Low complexity predominate over residues 815-824 (SSISSISASR). The stretch at 844 to 884 (KIQTLVDLISIATHNASVYLSIDDLTNFKIWILIRDSLLWD) is one WD 7 repeat. 2 disordered regions span residues 942–963 (AFRANSDEPSDAEKKPVSKLKE) and 1014–1047 (DEHEHQEEEQPHDSPTKSAQFHASPIAKSIPILQ). Basic and acidic residues-rich tracts occupy residues 952-963 (DAEKKPVSKLKE) and 1016-1028 (HEHQEEEQPHDSP). A phosphoserine mark is found at S1037, S1081, S1088, S1090, S1124, and S1134. 2 WD repeats span residues 1130–1170 (SRPD…KQLY) and 1217–1256 (LFGIAADVLKYCPFEDIMGSEGDQSSIRLFCERCGELITN). Residues 1294–1336 (CVLCERPLKKLTMVILPCGHEGHFQCIQEWFLDENEQECPGGC) form an RING-type; degenerate zinc finger.

It belongs to the WD repeat RTC1 family.

It localises to the vacuole. Functionally, may be involved in a process influencing telomere capping. The polypeptide is Restriction of telomere capping protein 1 (RTC1) (Saccharomyces cerevisiae (strain JAY291) (Baker's yeast)).